A 515-amino-acid chain; its full sequence is Vesicular acetylcholine transporter (515 aa).

The Cytoplasmic segment spans residues 1-40; it reads MGVTMAVGLAKAAMGKISSAIGERSKRISGAMNEPRRKRK. Residues 41–61 form a helical membrane-spanning segment; sequence ILLVIVCIAMLLDNMLYMVIV. Residues 62-112 are Lumenal, vesicle-facing; that stretch reads PIIPNYLETIRTYKLVYITTPSNGTNGSLLNSTQRAVLERNPNANEDIQIG. Residues N84, N87, and N92 are each glycosylated (N-linked (GlcNAc...) asparagine). The helical transmembrane segment at 113-133 threads the bilayer; the sequence is VLFASKAILQLLSNPFTGTFI. At 134 to 139 the chain is on the cytoplasmic side; sequence DRVGYD. Residues 140–160 traverse the membrane as a helical segment; that stretch reads IPLLIGLTIMFFSTITFAFGE. Residues 161 to 169 lie on the Lumenal, vesicle side of the membrane; sequence SYAVLFAAR. A helical membrane pass occupies residues 170–190; the sequence is SLQGLGSAFADTSGIAMIADK. The Cytoplasmic portion of the chain corresponds to 191–201; sequence YTEESERTQAL. A helical transmembrane segment spans residues 202–222; it reads GIALAFISFGSLVAPPFGGVL. Residues 223–229 lie on the Lumenal, vesicle side of the membrane; that stretch reads YQFAGKW. Residues 230–250 traverse the membrane as a helical segment; it reads VPFLVLSFVCLLDGILLLMVV. Residues 251–271 lie on the Cytoplasmic side of the membrane; it reads TPFASRTRENMLQGTPIYKLM. The helical transmembrane segment at 272–292 threads the bilayer; the sequence is IDPYIAVVAGALTTCNIPLAF. The Lumenal, vesicle portion of the chain corresponds to 293 to 310; that stretch reads LEPTISNWMKKTMNASEW. N-linked (GlcNAc...) asparagine glycosylation occurs at N306. A helical membrane pass occupies residues 311-331; it reads QMGITWLPAFFPHILGVYITV. The Cytoplasmic segment spans residues 332–341; that stretch reads KLAAKYPNYQ. A helical membrane pass occupies residues 342–362; that stretch reads WFYGAVGLVIIGASSCTIPAC. The Lumenal, vesicle portion of the chain corresponds to 363 to 367; the sequence is RNFEE. The chain crosses the membrane as a helical span at residues 368–388; it reads LIIPLCALCFGIALVDTALLP. Over 389-404 the chain is Cytoplasmic; that stretch reads TLAFLVDIRYVSVYGS. Residues 405 to 425 traverse the membrane as a helical segment; sequence VYAIADISYSVAYALGPIMAG. At 426-432 the chain is on the lumenal, vesicle side; that stretch reads QIVHDLG. The chain crosses the membrane as a helical span at residues 433–453; it reads FVQLNLGMGLVNILYAPALLF. The Cytoplasmic portion of the chain corresponds to 454–515; the sequence is LRNVCQMKPS…VLSDQEGYSE (62 aa). The interval 489–515 is disordered; that stretch reads AAKEPHGSSSGNHSVHAVLSDQEGYSE.

Belongs to the major facilitator superfamily. Vesicular transporter family. In terms of tissue distribution, electric lobe.

The protein resides in the membrane. Its function is as follows. Involved in acetylcholine transport into synaptic vesicles. This is Vesicular acetylcholine transporter from Tetronarce californica (Pacific electric ray).